A 566-amino-acid chain; its full sequence is Cytoplasmic polyadenylation element-binding protein 2 (566 aa).

Disordered regions lie at residues 17-46 (FWGNGDQLEGKTLSSIKQQESKKMDDSVEG) and 64-98 (LERLHEKEEQECEEERLDWSEKVDSEEEEEDIQEQ). Positions 87 to 98 (DSEEEEEDIQEQ) are enriched in acidic residues. In terms of domain architecture, RRM spans 430–512 (MVAFIGGVPR…KRVEIKPYFF (83 aa)).

Its function is as follows. Cytoplasmic polyadenylation element binding protein that binds to and regulates the translation of specific mRNAs. This chain is Cytoplasmic polyadenylation element-binding protein 2 (cpb-2), found in Caenorhabditis briggsae.